Here is a 131-residue protein sequence, read N- to C-terminus: uncharacterized protein (131 aa).

The tract at residues 99–131 (NAIQEEEIDMEQQEEKEEKPREKGKKKSVEEEF) is disordered. Residues 102–113 (QEEEIDMEQQEE) show a composition bias toward acidic residues. Residues 114 to 131 (KEEKPREKGKKKSVEEEF) are compositionally biased toward basic and acidic residues.

This is an uncharacterized protein from Sulfolobus islandicus rod-shaped virus 1 (SIRV-1).